A 308-amino-acid polypeptide reads, in one-letter code: Very-long-chain enoyl-CoA reductase (308 aa).

Residues 1–86 (MKHYEVEIRD…YFRDLGAQIS (86 aa)) are Cytoplasmic-facing. Lysine 22 bears the N6-acetyllysine mark. Serine 58 carries the post-translational modification Phosphoserine. Position 60 is an N6-acetyllysine (lysine 60). A helical membrane pass occupies residues 87–106 (WVTVFLTEYAGPLFIYLLFY). At 107–124 (FRVPFIYGRKYDFTSSRH) the chain is on the lumenal side. The helical transmembrane segment at 125-147 (TVVHLACMCHSFHYIKRLLETLF) threads the bilayer. The Cytoplasmic segment spans residues 148–158 (VHRFSHGTMPL). A helical membrane pass occupies residues 159-180 (RNIFKNCTYYWGFAAWMAYYIN). Residues 181-189 (HPLYTPPTY) are Lumenal-facing. The chain crosses the membrane as a helical span at residues 190 to 216 (GVQQVKLALAVFVICQLGNFSIHMALR). The Cytoplasmic segment spans residues 217–245 (DLRPAGSKTRKIPYPTKNPFTWLFLLVSC). Residues 246-262 (PNYTYEVGSWIGFAILT) traverse the membrane as a helical segment. The Lumenal segment spans residues 263–264 (QC). A helical transmembrane segment spans residues 265–292 (VPVALFSLVGFTQMTIWAKGKHRSYLKE). Residues 293–308 (FRDYPPLRMPIIPFLL) are Cytoplasmic-facing.

Belongs to the steroid 5-alpha reductase family. Interacts with ELOVL1 and LASS2. In terms of processing, glycosylated.

It is found in the endoplasmic reticulum membrane. The enzyme catalyses a very-long-chain 2,3-saturated fatty acyl-CoA + NADP(+) = a very-long-chain (2E)-enoyl-CoA + NADPH + H(+). It catalyses the reaction octadecanoyl-CoA + NADP(+) = (2E)-octadecenoyl-CoA + NADPH + H(+). It carries out the reaction (2E,7Z,10Z,13Z,16Z)-docosapentaenoyl-CoA + NADPH + H(+) = (7Z,10Z,13Z,16Z)-docosatetraenoyl-CoA + NADP(+). The catalysed reaction is (2E,7Z,10Z,13Z,16Z,19Z)-docosahexaenoyl-CoA + NADPH + H(+) = (7Z,10Z,13Z,16Z,19Z)-docosapentaenoyl-CoA + NADP(+). The enzyme catalyses (2E,8Z,11Z,14Z)-eicosatetraenoyl-CoA + NADPH + H(+) = (8Z,11Z,14Z)-eicosatrienoyl-CoA + NADP(+). It catalyses the reaction (2E)-hexadecenoyl-CoA + NADPH + H(+) = hexadecanoyl-CoA + NADP(+). Its pathway is lipid metabolism; fatty acid biosynthesis. It participates in lipid metabolism; sphingolipid metabolism. Its function is as follows. Involved in both the production of very long-chain fatty acids for sphingolipid synthesis and the degradation of the sphingosine moiety in sphingolipids through the sphingosine 1-phosphate metabolic pathway. Catalyzes the last of the four reactions of the long-chain fatty acids elongation cycle. This endoplasmic reticulum-bound enzymatic process, allows the addition of 2 carbons to the chain of long- and very long-chain fatty acids/VLCFAs per cycle. This enzyme reduces the trans-2,3-enoyl-CoA fatty acid intermediate to an acyl-CoA that can be further elongated by entering a new cycle of elongation. Thereby, it participates in the production of VLCFAs of different chain lengths that are involved in multiple biological processes as precursors of membrane lipids and lipid mediators. Catalyzes the saturation step of the sphingosine 1-phosphate metabolic pathway, the conversion of trans-2-hexadecenoyl-CoA to palmitoyl-CoA. The chain is Very-long-chain enoyl-CoA reductase (Tecr) from Mus musculus (Mouse).